The chain runs to 134 residues: MKKKHDGIVYETKEVLNPSPKVTHCCKSLWLKYSFQKAYMTQLVSSQPVPAMSRNPDHNLLSQPKEHSIVQKHHQEEIIHKLAMQLRHIGDNIDHRMVREDLQQDGRDALDHFVFFFFRRVQVLLHFFWNNHLL.

The short motif at 131-134 (NHLL) is the Microbody targeting signal element.

It localises to the peroxisome. This is Peroxisomal testis-specific protein 1 (PXT1) from Homo sapiens (Human).